A 125-amino-acid chain; its full sequence is Flagellar protein FliT (125 aa).

The segment at 1-50 is required for homodimerization; that stretch reads MDNKMDLLSAYQRILSLSEQMLNLAKNEKWDELVDMEITYLKAVEVISHS. The segment at 60 to 98 is fliD binding; sequence LQQKMTNILQIILDNENEIKKLLQKRLDELSKLIKQASQ.

This sequence belongs to the FliT family. Homodimer. Interacts with FliD and FlhC.

It is found in the cytoplasm. The protein localises to the cytosol. Functionally, dual-function protein that regulates the transcription of class 2 flagellar operons and that also acts as an export chaperone for the filament-capping protein FliD. As a transcriptional regulator, acts as an anti-FlhDC factor; it directly binds FlhC, thus inhibiting the binding of the FlhC/FlhD complex to class 2 promoters, resulting in decreased expression of class 2 flagellar operons. As a chaperone, effects FliD transition to the membrane by preventing its premature polymerization, and by directing it to the export apparatus. This Photorhabdus laumondii subsp. laumondii (strain DSM 15139 / CIP 105565 / TT01) (Photorhabdus luminescens subsp. laumondii) protein is Flagellar protein FliT.